The following is a 215-amino-acid chain: Ion-translocating oxidoreductase complex subunit G (215 aa).

A helical membrane pass occupies residues 9 to 29 (GLILSLFAIITSGLIALTYFG). At Thr-176 the chain carries FMN phosphoryl threonine.

Belongs to the RnfG family. The complex is composed of six subunits: RnfA, RnfB, RnfC, RnfD, RnfE and RnfG. The cofactor is FMN.

It is found in the cell inner membrane. In terms of biological role, part of a membrane-bound complex that couples electron transfer with translocation of ions across the membrane. The sequence is that of Ion-translocating oxidoreductase complex subunit G from Pseudoalteromonas atlantica (strain T6c / ATCC BAA-1087).